Here is a 1158-residue protein sequence, read N- to C-terminus: Adipocyte enhancer-binding protein 1 (1158 aa).

An N-terminal signal peptide occupies residues 1–25; sequence MAAVRGAPLLSCLLALLALCPGGRP. Positions 41 to 387 are disordered; that stretch reads FLSELEPEPR…TPTEKVKCPP (347 aa). The segment covering 45-55 has biased composition (acidic residues); it reads LEPEPREDDVE. Over residues 100–110 the composition is skewed to basic and acidic residues; it reads DKGPKVPKESL. Residues 116–166 show a composition bias toward basic residues; the sequence is PPKKGKEKPPKATKKPKEKPPKATKKPKEKPPKATKKPKEKPPKATKKPPS. Positions 182-192 are enriched in pro residues; that stretch reads PLPPPPSPGPE. Over residues 193 to 202 the composition is skewed to low complexity; sequence ELPQEGGAPL. Residues 211–223 are compositionally biased toward basic and acidic residues; the sequence is EETHVEAREHQPE. The segment covering 252–266 has biased composition (basic residues); that stretch reads RQKQPRPPPSRRRRP. Residues 267–289 show a composition bias toward basic and acidic residues; it reads ERVWPEPPEEKAPAPAPEERIEP. Residues 290 to 300 are compositionally biased toward pro residues; that stretch reads PVKPLLPPLPP. The segment covering 326-371 has biased composition (basic and acidic residues); the sequence is PDAERQTDEEKEELKKPKKEDSSPKEETDKWAVEKGKDHKEPRKGE. An F5/8 type C domain is found at 383–540; it reads VKCPPIGMES…LCMRLEVLGC (158 aa). Positions 390–555 are required for DNA-binding and interaction with NFKBIA; the sequence is MESHRIEDNQ…YSYYAQNEVV (166 aa). Residues 421-624 are interaction with MAPK1 and MAPK3; the sequence is TGATEDDYYD…EPEFRYTAGI (204 aa). The N-linked (GlcNAc...) asparagine glycan is linked to Asn-528. Residues 555 to 985 form an interaction with PTEN region; it reads VATDDLDFRH…TQCNFILARS (431 aa). In terms of domain architecture, Peptidase M14 spans 563 to 904; the sequence is RHHSYKDMRQ…EALLTFMEQV (342 aa). Asn-922 carries N-linked (GlcNAc...) asparagine glycosylation. Residues 941-1158 are required for transcriptional repression; it reads DYWRILNPGE…ETYTVNFGDF (218 aa). Residues 1006-1158 are interaction with MAPK1 and MAPK3; the sequence is DPSRPMTPQQ…ETYTVNFGDF (153 aa). The segment covering 1108-1137 has biased composition (acidic residues); it reads EFETQLEPEFETQLEPEFEEEEEEEKEEEI. A disordered region spans residues 1108–1141; it reads EFETQLEPEFETQLEPEFEEEEEEEKEEEIATGQ.

It belongs to the peptidase M14 family. Isoform 1: Interacts with different types of collagen, including collagens I, III, and V. Isoform 2: Interacts with GNG5, NFKBIA, MAPK1, MAPK3 and PTEN. Interaction with MAPK1 may stimulate DNA-binding. May interact with calmodulin. Binds to DNA in vitro. Phosphorylated by MAPK1 in vitro. In terms of tissue distribution, expressed in osteoblast and visceral fat.

The protein localises to the secreted. It is found in the cytoplasm. Its subcellular location is the nucleus. In terms of biological role, as a positive regulator of collagen fibrillogenesis, it is probably involved in the organization and remodeling of the extracellular matrix. May positively regulate MAP-kinase activity in adipocytes, leading to enhanced adipocyte proliferation and reduced adipocyte differentiation. May also positively regulate NF-kappa-B activity in macrophages by promoting the phosphorylation and subsequent degradation of I-kappa-B-alpha (NFKBIA), leading to enhanced macrophage inflammatory responsiveness. Can act as a transcriptional repressor. This is Adipocyte enhancer-binding protein 1 (AEBP1) from Homo sapiens (Human).